Here is a 354-residue protein sequence, read N- to C-terminus: MPLEERRSSGERNDAAPTNHRRPGEKRASTAKQVSSVPFLGAAGHQQSLPSSWKASCSGPLVMASDSDVKMLLNFVNLASSDIKAALDKSAPCRRSVDHRKYLQKQLKRFSQKYSRLPRGLPGRAAEPYLKRGSEDRPRRLLLDLGPDSSPGGGGGCKEKVLRNPYREECLAKEQLPQRQHPEAAQPGQVPMRKRQLPASFWEEPRPTHSYHVGLEGGLGPREGPPYEGKKNCKGLEPLGPETTLVSMSPRALAEKEPLKMPGVSLVGRVNAWSCCPFQYHGQPIYPGPLGALPQSPVPSLGLWRKSPAFPGELAHLCKDVDGLGQKVCRPVVLKPIPTKPAVPPPIFNVFGYL.

Composition is skewed to basic and acidic residues over residues 1-14 (MPLEERRSSGERND) and 129-142 (YLKRGSEDRPRRLL). Disordered regions lie at residues 1-35 (MPLEERRSSGERNDAAPTNHRRPGEKRASTAKQVS), 117-160 (LPRG…CKEK), and 172-193 (AKEQLPQRQHPEAAQPGQVPMR).

It belongs to the FAM181 family.

This Homo sapiens (Human) protein is Protein FAM181A (FAM181A).